The sequence spans 806 residues: Zygotic DNA replication licensing factor mcm3 (806 aa).

An MCM domain is found at 295 to 502; that stretch reads VFEQLSRSLA…HDREISDHVL (208 aa). 345 to 352 is an ATP binding site; that stretch reads GDPSVAKS. An Arginine finger motif is present at residues 477 to 480; that stretch reads SRFD. The tract at residues 662-738 is disordered; that stretch reads KKRRRREGES…TDSSAKPGLS (77 aa). Residues 693-702 show a composition bias toward basic and acidic residues; that stretch reads AQDGESHDPY.

The protein belongs to the MCM family. As to quaternary structure, component of the mcm2-7 complex (RLF-M). The complex forms a toroidal hexameric ring with the proposed subunit order mcm2-mcm6-mcm4-mcm7-mcm3-mcm5. Begins to associate with zmcm6 into mcm complexes at the neurula stage. Component of the CMG helicase complex, composed of the mcm2-7 complex, the GINS complex and cdc45.

Its subcellular location is the nucleus. It localises to the chromosome. The catalysed reaction is ATP + H2O = ADP + phosphate + H(+). In terms of biological role, acts as a component of the mcm2-7 complex (mcm complex) which is the putative replicative helicase essential for 'once per cell cycle' DNA replication initiation and elongation in eukaryotic cells. The active ATPase sites in the mcm2-7 ring are formed through the interaction surfaces of two neighboring subunits such that a critical structure of a conserved arginine finger motif is provided in trans relative to the ATP-binding site of the Walker A box of the adjacent subunit. The six ATPase active sites, however, are likely to contribute differentially to the complex helicase activity. The existence of maternal and zygotic forms of mcm3 and mcm6 suggests that specific forms of mcm2-7 complexes may be used during different stages of development. This is Zygotic DNA replication licensing factor mcm3 from Xenopus laevis (African clawed frog).